A 530-amino-acid chain; its full sequence is ATP-dependent 6-phosphofructokinase 4, chloroplastic (530 aa).

A chloroplast-targeting transit peptide spans 1-54; that stretch reads MEASISFLGSTKPNISLFNPSSNVLPRRDFPLPALKLKKVSVLPRILHQKRLIR. A Phosphoserine modification is found at S121. Residues G152, 215-216, and 240-243 contribute to the ATP site; these read RG and GGGT. Substrate contacts are provided by residues 269 to 271, 314 to 316, E370, and 427 to 430; these read TID, MGR, and YMIR. D271 (proton acceptor) is an active-site residue.

Belongs to the phosphofructokinase type A (PFKA) family. PPi-dependent PFK group II subfamily. Atypical ATP-dependent clade 'X' sub-subfamily. As to quaternary structure, homotetramer. It depends on Mg(2+) as a cofactor. Expressed in leaves, stems and flowers.

The protein localises to the plastid. The protein resides in the chloroplast. It carries out the reaction beta-D-fructose 6-phosphate + ATP = beta-D-fructose 1,6-bisphosphate + ADP + H(+). It functions in the pathway carbohydrate degradation; glycolysis; D-glyceraldehyde 3-phosphate and glycerone phosphate from D-glucose: step 3/4. With respect to regulation, allosterically activated by AMP. Catalyzes the phosphorylation of D-fructose 6-phosphate to fructose 1,6-bisphosphate by ATP, the first committing step of glycolysis. The protein is ATP-dependent 6-phosphofructokinase 4, chloroplastic of Arabidopsis thaliana (Mouse-ear cress).